The primary structure comprises 570 residues: Proline--tRNA ligase (570 aa).

It belongs to the class-II aminoacyl-tRNA synthetase family. ProS type 1 subfamily. Homodimer.

The protein resides in the cytoplasm. The enzyme catalyses tRNA(Pro) + L-proline + ATP = L-prolyl-tRNA(Pro) + AMP + diphosphate. Its function is as follows. Catalyzes the attachment of proline to tRNA(Pro) in a two-step reaction: proline is first activated by ATP to form Pro-AMP and then transferred to the acceptor end of tRNA(Pro). As ProRS can inadvertently accommodate and process non-cognate amino acids such as alanine and cysteine, to avoid such errors it has two additional distinct editing activities against alanine. One activity is designated as 'pretransfer' editing and involves the tRNA(Pro)-independent hydrolysis of activated Ala-AMP. The other activity is designated 'posttransfer' editing and involves deacylation of mischarged Ala-tRNA(Pro). The misacylated Cys-tRNA(Pro) is not edited by ProRS. The protein is Proline--tRNA ligase of Syntrophomonas wolfei subsp. wolfei (strain DSM 2245B / Goettingen).